Here is an 82-residue protein sequence, read N- to C-terminus: Conotoxin Gla-TxX (82 aa).

The first 25 residues, 1 to 25, serve as a signal peptide directing secretion; that stretch reads MSGHTSVSFLLLSIVALGMVATVIC. 5 positions are modified to 4-carboxyglutamate: Glu30, Glu34, Glu37, Glu40, and Glu41. Residue Asn72 is modified to Asparagine amide. Positions 77–82 are excised as a propeptide; sequence LIHMQK.

In terms of processing, contains 4 disulfide bonds. Expressed by the venom duct.

The protein resides in the secreted. The polypeptide is Conotoxin Gla-TxX (Conus textile (Cloth-of-gold cone)).